The primary structure comprises 509 residues: Protein root UVB sensitive 5 (509 aa).

Positions 22 to 49 (CQPKRRRVEHLRCSAQPSSIREDDEDAD) are disordered.

This sequence belongs to the RUS1 family.

The protein is Protein root UVB sensitive 5 of Arabidopsis thaliana (Mouse-ear cress).